We begin with the raw amino-acid sequence, 122 residues long: Large ribosomal subunit protein bL12 (122 aa).

This sequence belongs to the bacterial ribosomal protein bL12 family. Homodimer. Part of the ribosomal stalk of the 50S ribosomal subunit. Forms a multimeric L10(L12)X complex, where L10 forms an elongated spine to which 2 to 4 L12 dimers bind in a sequential fashion. Binds GTP-bound translation factors.

Functionally, forms part of the ribosomal stalk which helps the ribosome interact with GTP-bound translation factors. Is thus essential for accurate translation. This is Large ribosomal subunit protein bL12 from Buchnera aphidicola subsp. Schizaphis graminum (strain Sg).